A 550-amino-acid polypeptide reads, in one-letter code: Protein UshA (550 aa).

A signal peptide spans 1-25 (MKLLQRGVALALLTTFTLASETALA). 7 residues coordinate Zn(2+): Asp-41, His-43, Asp-84, Asn-116, His-217, His-252, and Gln-254. Cys-258 and Cys-275 are oxidised to a cystine. Residues 375–379 (RDKVR) and 498–504 (FNATGGD) each bind substrate.

The protein belongs to the 5'-nucleotidase family. In terms of assembly, monomer. Zn(2+) serves as cofactor.

The protein localises to the periplasm. The enzyme catalyses UDP-sugar + H2O = UMP + alpha-D-aldose 1-phosphate.. It catalyses the reaction a ribonucleoside 5'-phosphate + H2O = a ribonucleoside + phosphate. The activity of this protein is inhibited by an intracellular protein inhibitor. In terms of biological role, degradation of external UDP-glucose to uridine monophosphate and glucose-1-phosphate, which can then be used by the cell. The chain is Protein UshA (ushA) from Escherichia coli (strain K12).